A 258-amino-acid polypeptide reads, in one-letter code: Thiazole synthase (258 aa).

The active-site Schiff-base intermediate with DXP is the lysine 100. 1-deoxy-D-xylulose 5-phosphate is bound by residues glycine 161, 187–188 (AG), and 209–210 (NT).

This sequence belongs to the ThiG family. As to quaternary structure, homotetramer. Forms heterodimers with either ThiH or ThiS.

The protein resides in the cytoplasm. The enzyme catalyses [ThiS sulfur-carrier protein]-C-terminal-Gly-aminoethanethioate + 2-iminoacetate + 1-deoxy-D-xylulose 5-phosphate = [ThiS sulfur-carrier protein]-C-terminal Gly-Gly + 2-[(2R,5Z)-2-carboxy-4-methylthiazol-5(2H)-ylidene]ethyl phosphate + 2 H2O + H(+). It participates in cofactor biosynthesis; thiamine diphosphate biosynthesis. Catalyzes the rearrangement of 1-deoxy-D-xylulose 5-phosphate (DXP) to produce the thiazole phosphate moiety of thiamine. Sulfur is provided by the thiocarboxylate moiety of the carrier protein ThiS. In vitro, sulfur can be provided by H(2)S. In Campylobacter jejuni subsp. jejuni serotype O:6 (strain 81116 / NCTC 11828), this protein is Thiazole synthase.